The chain runs to 141 residues: Hemoglobin subunit beta-C(NA) (141 aa).

The 141-residue stretch at 1–141 folds into the Globin domain; the sequence is PBKALITGFW…VASALAHRYH (141 aa). Residues H58 and H87 each contribute to the heme b site.

Belongs to the globin family. As to quaternary structure, heterotetramer of two alpha chains and two beta chains. As to expression, red blood cells.

Functionally, involved in oxygen transport from the lung to the various peripheral tissues. The protein is Hemoglobin subunit beta-C(NA) of Ammotragus lervia (Barbary sheep).